Reading from the N-terminus, the 149-residue chain is Low molecular weight protein-tyrosine-phosphatase Wzb (149 aa).

Cysteine 9 (nucleophile) is an active-site residue. The active site involves arginine 15. Aspartate 115 acts as the Proton donor in catalysis.

This sequence belongs to the low molecular weight phosphotyrosine protein phosphatase family.

It catalyses the reaction O-phospho-L-tyrosyl-[protein] + H2O = L-tyrosyl-[protein] + phosphate. Its pathway is glycan metabolism; exopolysaccharide biosynthesis. In terms of biological role, dephosphorylates Wzc. Required for the extracellular polysaccharide colanic acid synthesis. Probably involved in the export of colanic acid from the cell to medium. Involved in protection of cells against contact-dependent growth inhibition (CDI). The sequence is that of Low molecular weight protein-tyrosine-phosphatase Wzb (wzb) from Salmonella typhi.